The primary structure comprises 468 residues: Chromosomal replication initiator protein DnaA (468 aa).

Positions 1 to 84 are domain I, interacts with DnaA modulators; the sequence is MSSSLWLQCL…RFEVGSRPVA (84 aa). Residues 81–104 are disordered; it reads RPVAAPKPAPTRTPADVAAESSAP. Positions 84–131 are domain II; sequence AAPKPAPTRTPADVAAESSAPAQLQARKPVHKTWDDDAQAIADINHRS. Residues 132 to 348 are domain III, AAA+ region; that stretch reads NVNPKHKFNN…GALNRVIANA (217 aa). ATP contacts are provided by Gly176, Gly178, Lys179, and Thr180. The domain IV, binds dsDNA stretch occupies residues 349–468; the sequence is NFTGRPITID…YSNLIRTLSS (120 aa).

This sequence belongs to the DnaA family. In terms of assembly, oligomerizes as a right-handed, spiral filament on DNA at oriC.

The protein localises to the cytoplasm. In terms of biological role, plays an essential role in the initiation and regulation of chromosomal replication. ATP-DnaA binds to the origin of replication (oriC) to initiate formation of the DNA replication initiation complex once per cell cycle. Binds the DnaA box (a 9 base pair repeat at the origin) and separates the double-stranded (ds)DNA. Forms a right-handed helical filament on oriC DNA; dsDNA binds to the exterior of the filament while single-stranded (ss)DNA is stabiized in the filament's interior. The ATP-DnaA-oriC complex binds and stabilizes one strand of the AT-rich DNA unwinding element (DUE), permitting loading of DNA polymerase. After initiation quickly degrades to an ADP-DnaA complex that is not apt for DNA replication. Binds acidic phospholipids. This chain is Chromosomal replication initiator protein DnaA, found in Vibrio campbellii (strain ATCC BAA-1116).